Here is a 276-residue protein sequence, read N- to C-terminus: Large ribosomal subunit protein uL2 (276 aa).

The tract at residues valine 224–arginine 276 is disordered. Residues aspartate 230–glutamate 242 show a composition bias toward basic and acidic residues.

Belongs to the universal ribosomal protein uL2 family. In terms of assembly, part of the 50S ribosomal subunit. Forms a bridge to the 30S subunit in the 70S ribosome.

Its function is as follows. One of the primary rRNA binding proteins. Required for association of the 30S and 50S subunits to form the 70S ribosome, for tRNA binding and peptide bond formation. It has been suggested to have peptidyltransferase activity; this is somewhat controversial. Makes several contacts with the 16S rRNA in the 70S ribosome. In Polynucleobacter asymbioticus (strain DSM 18221 / CIP 109841 / QLW-P1DMWA-1) (Polynucleobacter necessarius subsp. asymbioticus), this protein is Large ribosomal subunit protein uL2.